A 263-amino-acid polypeptide reads, in one-letter code: Polyglutamine-binding protein 1 (263 aa).

The WW domain maps to Glu-46–Asp-80. Residues Asn-94–Asp-263 form a disordered region. The segment covering Ala-99–Asp-173 has biased composition (basic and acidic residues). The stretch at Glu-104 to Val-110 is one 1-1; approximate repeat. A 5 X 7 AA approximate tandem repeats of D-R-[NS]-H-E-K-S region spans residues Glu-104–Ser-138. The stretch at Asp-111–Ser-117 is one 1-2 repeat. The 1-3; approximate repeat unit spans residues Asp-118 to Pro-124. The stretch at Asp-125 to Ala-131 is one 1-4; approximate repeat. Repeat copies occupy residues Asp-132–Ser-138, Asp-139–Arg-140, Glu-141–Arg-142, Glu-143–Arg-144, Asp-150–Arg-151, Glu-152–Arg-153, Asp-154–Arg-155, Asp-156–Arg-157, Glu-158–Arg-159, and Glu-160–Arg-161. The tract at residues Asp-139–Arg-144 is 3 X 2 AA tandem repeats of [DE]-R. Residues Asp-150–Arg-161 are 6 X 2 AA tandem repeats of [DE]-R. Residues Tyr-243 to Asn-253 are important for interaction with TXNL4A. At Ser-245 the chain carries Phosphoserine.

Interacts with POU3F2/Brn-2, ATXN1, TXNL4A, HTT and AR. Interaction with ATXN1 correlates positively with the length of the polyglutamine tract. Interacts with RNA polymerase II large subunit in a phosphorylation-dependent manner. Forms a ternary complex with ATXN1 mutant and phosphorylated RNA polymerase II. Interacts (via C-terminus) with TXNL4A and CD2BP2. Interacts (via WW domain) with ATN1 and SF3B1, and may interact with additional splice factors. Interacts (via WW domain) with WBP11; Leading to reduce interaction between PQBP1 and TXNL4A. Interacts with CAPRIN1. Interacts with DDX1. Interacts with SFPQ. Interacts with KHSRP.

The protein localises to the nucleus. Its subcellular location is the nucleus speckle. The protein resides in the cytoplasmic granule. In terms of biological role, intrinsically disordered protein that acts as a scaffold, and which is involved in different processes, such as pre-mRNA splicing, transcription regulation, innate immunity and neuron development. Interacts with splicing-related factors via the intrinsically disordered region and regulates alternative splicing of target pre-mRNA species. May suppress the ability of POU3F2 to transactivate the DRD1 gene in a POU3F2 dependent manner. Can activate transcription directly or via association with the transcription machinery. May be involved in ATXN1 mutant-induced cell death. The interaction with ATXN1 mutant reduces levels of phosphorylated RNA polymerase II large subunit. Involved in the assembly of cytoplasmic stress granule, possibly by participating in the transport of neuronal RNA granules. Also acts as an innate immune sensor of infection by retroviruses, by detecting the presence of reverse-transcribed DNA in the cytosol. Directly binds retroviral reverse-transcribed DNA in the cytosol and interacts with CGAS, leading to activate the cGAS-STING signaling pathway, triggering type-I interferon production. The protein is Polyglutamine-binding protein 1 (Pqbp1) of Rattus norvegicus (Rat).